We begin with the raw amino-acid sequence, 144 residues long: Large ribosomal subunit protein uL13 (144 aa).

This sequence belongs to the universal ribosomal protein uL13 family. In terms of assembly, part of the 50S ribosomal subunit.

This protein is one of the early assembly proteins of the 50S ribosomal subunit, although it is not seen to bind rRNA by itself. It is important during the early stages of 50S assembly. The protein is Large ribosomal subunit protein uL13 of Mycoplasmopsis synoviae (strain 53) (Mycoplasma synoviae).